The sequence spans 95 residues: MQFTTILSIGITVFGLLNTGAFAAPQPVPEAYAVSDPEAHPDDFAGMDANQLQKRGFGCNGPWDEDDMQCHNHCKSIKGYKGGYCAKGGFVCKCY.

Positions 1-23 (MQFTTILSIGITVFGLLNTGAFA) are cleaved as a signal peptide. Positions 24–55 (APQPVPEAYAVSDPEAHPDDFAGMDANQLQKR) are excised as a propeptide. Phenylalanine 57, glycine 58, and cysteine 59 together coordinate beta-D-GlcNAc-(1-&gt;4)-Mur2Ac(oyl-L-Ala-gamma-D-Glu-L-Lys-D-Ala-D-Ala)-di-trans,octa-cis-undecaprenyl diphosphate. Disulfide bonds link cysteine 59-cysteine 85, cysteine 70-cysteine 92, and cysteine 74-cysteine 94. The tract at residues 61 to 64 (GPWD) is binds to membrane interface. Positions 67, 73, 84, 86, 88, 92, and 93 each coordinate beta-D-GlcNAc-(1-&gt;4)-Mur2Ac(oyl-L-Ala-gamma-D-Glu-L-Lys-D-Ala-D-Ala)-di-trans,octa-cis-undecaprenyl diphosphate. The segment at 86-92 (AKGGFVC) is binds to membrane interface.

Belongs to the invertebrate defensin family. Type 2 subfamily.

It is found in the secreted. It localises to the host cell membrane. Antimicrobial peptide that potently acts against several species of Gram-positive bacteria. It selectively inhibits peptidoglycan biosynthesis through complex formation with the cell wall precursor lipid II (1:1 molar ratio) thus inhibiting cell wall synthesis. It does not disrupt cell membranes. Is especially active against numerous clinical isolates of S.pneumoniae, including all 90 different serotypes and isolates resistant to clinically used antibiotics. In vitro, shows considerable selectivity for bacteria over mammalian cells. The peptide synthesized in D-amino acids does not show antibacterial activity. In vitro, acts on voltage-gated potassium channels by moderately inhibiting mammalian Kv1.3/KCNA3 (IC(50)=2.8 uM), and moderately inhibiting others potassium channels. The chain is Fungal defensin plectasin (DEF) from Pseudoplectania nigrella (Ebony cup).